The following is a 504-amino-acid chain: MKLLEQIEKWAIETPDQTAFVWRDAKITYKQLKEDSDALAHWISSEYPDDRSPIMVYGHMQPEMIINFLGCVKAGHAYIPVDLSIPADRVQRIAENSGAKLLLSAATVTVTDLPVRIVSEDNLKDIFFTHKGNTPNPEHAVKGDENFYIIYTSGSTGNPKGVQITYNCLVSFTQWAVEDFNLQTGQVFLNQAPFSFDLSVMDIYPSLVTGGTLWAIDKDMIARPKDLFASLEQSDIQVWTSTPSFAEMCLMEASFSESMLPNMKTFLFCGEVLPNEVARKLIERFPKATIMNTYGPTEATVAVTGIHVTEEVLDQYKSLPVGYCKSDCRLLIMKEDGTIAPDGEKGEIVIVGPSVSVGYLGSPELTEKAFTMIDGERAYKTGDAGYVENGLLFYNGRLDFQIKLHGYRMELEEIEHHLRACSYVEGAVIVPIKKGEKYDYLLAVVVPGEHSFEKEFKLTSAIKKELNERLPNYMIPRKFMYQSSIPMTPNGKVDRKKLLSEVTA.

152-153 lines the ATP pocket; that stretch reads TS. Aspartate 197 is a binding site for D-alanine. ATP is bound at residue 292–297; it reads NTYGPT. D-alanine is bound at residue valine 301. Residues aspartate 383, 394–397, and lysine 492 contribute to the ATP site; that span reads YNGR. Lysine 492 contributes to the D-alanine binding site.

The protein belongs to the ATP-dependent AMP-binding enzyme family. DltA subfamily.

The protein resides in the cytoplasm. The catalysed reaction is holo-[D-alanyl-carrier protein] + D-alanine + ATP = D-alanyl-[D-alanyl-carrier protein] + AMP + diphosphate. Its pathway is cell wall biogenesis; lipoteichoic acid biosynthesis. In terms of biological role, catalyzes the first step in the D-alanylation of lipoteichoic acid (LTA), the activation of D-alanine and its transfer onto the D-alanyl carrier protein (Dcp) DltC. In an ATP-dependent two-step reaction, forms a high energy D-alanyl-AMP intermediate, followed by transfer of the D-alanyl residue as a thiol ester to the phosphopantheinyl prosthetic group of the Dcp. D-alanylation of LTA plays an important role in modulating the properties of the cell wall in Gram-positive bacteria, influencing the net charge of the cell wall. This Bacillus cereus (strain ZK / E33L) protein is D-alanine--D-alanyl carrier protein ligase.